Here is a 165-residue protein sequence, read N- to C-terminus: Ribosome maturation factor RimM (165 aa).

The PRC barrel domain occupies 94–165 (EDEFYIADLN…YVVLNYQREI (72 aa)).

It belongs to the RimM family. In terms of assembly, binds ribosomal protein uS19.

Its subcellular location is the cytoplasm. Its function is as follows. An accessory protein needed during the final step in the assembly of 30S ribosomal subunit, possibly for assembly of the head region. Essential for efficient processing of 16S rRNA. May be needed both before and after RbfA during the maturation of 16S rRNA. It has affinity for free ribosomal 30S subunits but not for 70S ribosomes. This is Ribosome maturation factor RimM from Rickettsia felis (strain ATCC VR-1525 / URRWXCal2) (Rickettsia azadi).